We begin with the raw amino-acid sequence, 257 residues long: Histidine/lysine/arginine/ornithine transport ATP-binding protein HisP (257 aa).

The 247-residue stretch at 6–252 (LNVIDLHKRY…PQSPRLQRFL (247 aa)) folds into the ABC transporter domain. Residues serine 40, glycine 41, glycine 43, lysine 44, serine 45, and threonine 46 each contribute to the ATP site.

The protein belongs to the ABC transporter superfamily. The HisPMQJ complex is composed of two ATP-binding proteins (HisP), two transmembrane proteins (HisM and HisQ) and a solute-binding protein (HisJ). The HisPMQ-ArgT complex is composed of two ATP-binding proteins (HisP), two transmembrane proteins (HisM and HisQ) and a solute-binding protein (ArgT).

The protein resides in the cell inner membrane. It carries out the reaction a polar amino acid(out) + ATP + H2O = a polar amino acid(in) + ADP + phosphate + H(+). The enzyme catalyses L-histidine(out) + ATP + H2O = L-histidine(in) + ADP + phosphate + H(+). It catalyses the reaction L-lysine(out) + ATP + H2O = L-lysine(in) + ADP + phosphate + H(+). The catalysed reaction is L-arginine(out) + ATP + H2O = L-arginine(in) + ADP + phosphate + H(+). It carries out the reaction L-ornithine(out) + ATP + H2O = L-ornithine(in) + ADP + phosphate + H(+). In terms of biological role, part of the ABC transporter complex HisPMQJ involved in histidine transport. Is also part of the ABC transporter complex HisPMQ-ArgT involved in lysine/arginine/ornithine transport. Shows ATPase activity. Responsible for energy coupling to the transport system. In Escherichia coli (strain K12), this protein is Histidine/lysine/arginine/ornithine transport ATP-binding protein HisP.